The primary structure comprises 374 residues: Ribosomal RNA large subunit methyltransferase G (374 aa).

This sequence belongs to the methyltransferase superfamily. RlmG family.

Its subcellular location is the cytoplasm. It catalyses the reaction guanosine(1835) in 23S rRNA + S-adenosyl-L-methionine = N(2)-methylguanosine(1835) in 23S rRNA + S-adenosyl-L-homocysteine + H(+). Specifically methylates the guanine in position 1835 (m2G1835) of 23S rRNA. This Pseudomonas entomophila (strain L48) protein is Ribosomal RNA large subunit methyltransferase G.